The following is a 627-amino-acid chain: Phosphomethylpyrimidine synthase (627 aa).

Over residues 1-24 (MSATQKNNITRLEQLDRQSTQPFP) the composition is skewed to polar residues. The disordered stretch occupies residues 1 to 29 (MSATQKNNITRLEQLDRQSTQPFPNSRKV). Substrate contacts are provided by residues Asn-231, Met-260, Tyr-289, His-325, 345-347 (SRG), 386-389 (DGLR), and Glu-425. His-429 provides a ligand contact to Zn(2+). Residue Tyr-452 participates in substrate binding. His-493 is a binding site for Zn(2+). The [4Fe-4S] cluster site is built by Cys-573, Cys-576, and Cys-581.

Belongs to the ThiC family. In terms of assembly, homodimer. [4Fe-4S] cluster is required as a cofactor.

It catalyses the reaction 5-amino-1-(5-phospho-beta-D-ribosyl)imidazole + S-adenosyl-L-methionine = 4-amino-2-methyl-5-(phosphooxymethyl)pyrimidine + CO + 5'-deoxyadenosine + formate + L-methionine + 3 H(+). It participates in cofactor biosynthesis; thiamine diphosphate biosynthesis. Its function is as follows. Catalyzes the synthesis of the hydroxymethylpyrimidine phosphate (HMP-P) moiety of thiamine from aminoimidazole ribotide (AIR) in a radical S-adenosyl-L-methionine (SAM)-dependent reaction. This Pseudomonas aeruginosa (strain LESB58) protein is Phosphomethylpyrimidine synthase.